A 481-amino-acid polypeptide reads, in one-letter code: U6 small nuclear RNA (adenine-(43)-N(6))-methyltransferase (481 aa).

S-adenosyl-L-methionine is bound by residues lysine 82, glycine 108, aspartate 131, threonine 164, and asparagine 184.

The protein belongs to the methyltransferase superfamily. METTL16/RlmF family. As to quaternary structure, self-associates. Interacts with dlc-1; the interaction is direct, and is required for nuclear localization of mett-10.

Its subcellular location is the nucleus. The catalysed reaction is an adenosine in mRNA + S-adenosyl-L-methionine = an N(6)-methyladenosine in mRNA + S-adenosyl-L-homocysteine + H(+). It catalyses the reaction adenosine in U6 snRNA + S-adenosyl-L-methionine = N(6)-methyladenosine in U6 snRNA + S-adenosyl-L-homocysteine + H(+). Its function is as follows. RNA N6-methyltransferase that methylates adenosine residues at the N(6) position of a subset of RNAs and is involved in S-adenosyl-L-methionine homeostasis by regulating splicing of S-adenosylmethionine synthase transcripts (sams-3, sams-4 and sams-5). Able to N6-methylate a subset of mRNAs containing the 5'UACAGAAAC-3' nonamer sequence. Plays a key role in S-adenosyl-L-methionine homeostasis: under rich-diet conditions, catalyzes N6-methylation of S-adenosylmethionine synthase mRNAs (sams-3, sams-4 and sams-5), directly inhibiting splicing and protein production of S-adenosylmethionine synthase. In addition to mRNAs, also able to mediate N6-methylation of U6 small nuclear RNA (U6 snRNA). Required for gamete production, inhibiting germ cell proliferative fate and ensuring germ cell meiotic development. Also promotes progression of the mitotic cell cycle in those germ cells that continue to proliferate. Plays a role in the development of the vulva, somatic gonad and embryo. This Caenorhabditis briggsae protein is U6 small nuclear RNA (adenine-(43)-N(6))-methyltransferase.